The sequence spans 196 residues: Bcl-2-like protein 11 (196 aa).

A disordered region spans residues 1-68 (MAKQPSDVNS…PLAPPASPGP (68 aa)). The segment covering 34–43 (TSLQTESQGN) has biased composition (polar residues). Position 65 is a phosphoserine; by MAPK (Ser-65). Phosphoserine occurs at positions 73, 83, and 90. The disordered stretch occupies residues 90-114 (SGYFSFDTDRSPAPMSCDKSTQTPS). A BH3 motif is present at residues 146–160 (IAQELRRIGDEFNET).

It belongs to the Bcl-2 family. As to quaternary structure, forms heterodimers with a number of antiapoptotic Bcl-2 proteins, including MCL1, BCL2, BCL2L1 isoform Bcl-X(L), BCL2A1/BFL-1, and BCL2L2/BCLW. Does not heterodimerize with proapoptotic proteins such as BAD, BOK or BAK. Identified in a complex containing BCL2L11, DYNLL1 and BCL2L1 isoform Bcl-X(L); BH3 integrity is required for BCL2L1-binding. Interacts with YWHAZ. When phosphorylated, interacts with TRIM2; this interaction is associated with ubiquitination and degradation. Interacts (via BH3) with MCL1; this interaction may sequester BCL2L11 and prevent its pro-apoptotic activity. When phosphorylated, isoform BimEL interacts with USP27X; this interaction leads to BCL2L11 deubiquitination and stabilization. Interacts with GIMAP5. Interacts with BCL2L10/BCL-B. In terms of processing, phosphorylation at Ser-65 by MAPK1/MAPK3 leads interaction with TRIM2 and ubiquitination, followed by proteasomal degradation. Deubiquitination catalyzed by USP27X stabilizes the protein. Ubiquitination by TRIM2 following phosphorylation by MAPK1/MAPK3 leads to proteasomal degradation. Conversely, deubiquitination catalyzed by USP27X stabilizes the protein. In terms of tissue distribution, widely expressed.

Its subcellular location is the membrane. The protein localises to the mitochondrion. In terms of biological role, induces apoptosis and anoikis. The sequence is that of Bcl-2-like protein 11 (Bcl2l11) from Rattus norvegicus (Rat).